We begin with the raw amino-acid sequence, 379 residues long: UDP-4-amino-4-deoxy-L-arabinose--oxoglutarate aminotransferase (379 aa).

The residue at position 182 (lysine 182) is an N6-(pyridoxal phosphate)lysine.

This sequence belongs to the DegT/DnrJ/EryC1 family. ArnB subfamily. In terms of assembly, homodimer. Requires pyridoxal 5'-phosphate as cofactor.

It carries out the reaction UDP-4-amino-4-deoxy-beta-L-arabinose + 2-oxoglutarate = UDP-beta-L-threo-pentopyranos-4-ulose + L-glutamate. It functions in the pathway nucleotide-sugar biosynthesis; UDP-4-deoxy-4-formamido-beta-L-arabinose biosynthesis; UDP-4-deoxy-4-formamido-beta-L-arabinose from UDP-alpha-D-glucuronate: step 2/3. It participates in bacterial outer membrane biogenesis; lipopolysaccharide biosynthesis. In terms of biological role, catalyzes the conversion of UDP-4-keto-arabinose (UDP-Ara4O) to UDP-4-amino-4-deoxy-L-arabinose (UDP-L-Ara4N). The modified arabinose is attached to lipid A and is required for resistance to polymyxin and cationic antimicrobial peptides. The polypeptide is UDP-4-amino-4-deoxy-L-arabinose--oxoglutarate aminotransferase (Salmonella schwarzengrund (strain CVM19633)).